Consider the following 211-residue polypeptide: Glutathione S-transferase class-mu 28 kDa isozyme (211 aa).

Positions 4 to 86 (DHIKVIYFNG…YMAKKHHMMG (83 aa)) constitute a GST N-terminal domain. Glutathione is bound by residues Y10, R16, W41, K45, L53, E70, S71, and D104. The GST C-terminal domain maps to 88–211 (TDEEYYNVEK…YLSDRAATPF (124 aa)).

Belongs to the GST superfamily. Mu family. Homodimer.

The catalysed reaction is RX + glutathione = an S-substituted glutathione + a halide anion + H(+). Functionally, conjugation of reduced glutathione to a wide number of exogenous and endogenous hydrophobic electrophiles. Its function is as follows. GST isoenzymes appear to play a central role in the parasite detoxification system. Other functions are also suspected including a role in increasing the solubility of haematin in the parasite gut. In Schistosoma bovis (Blood fluke), this protein is Glutathione S-transferase class-mu 28 kDa isozyme.